The following is a 274-amino-acid chain: Thiamine kinase (274 aa).

The protein belongs to the thiamine kinase family.

The enzyme catalyses thiamine + ATP = thiamine phosphate + ADP + H(+). The protein operates within cofactor biosynthesis; thiamine diphosphate biosynthesis; thiamine phosphate from thiamine: step 1/1. In terms of biological role, catalyzes the ATP-dependent phosphorylation of thiamine to thiamine phosphate. Is involved in thiamine salvage. The polypeptide is Thiamine kinase (Salmonella newport (strain SL254)).